Consider the following 298-residue polypeptide: UDP-N-acetylenolpyruvoylglucosamine reductase (298 aa).

The region spanning 26 to 190 (RAGGPAERLY…VAAVLDLEPG (165 aa)) is the FAD-binding PCMH-type domain. Residue arginine 170 is part of the active site. The active-site Proton donor is serine 219. Glutamate 289 is a catalytic residue.

Belongs to the MurB family. FAD is required as a cofactor.

The protein resides in the cytoplasm. The catalysed reaction is UDP-N-acetyl-alpha-D-muramate + NADP(+) = UDP-N-acetyl-3-O-(1-carboxyvinyl)-alpha-D-glucosamine + NADPH + H(+). It functions in the pathway cell wall biogenesis; peptidoglycan biosynthesis. Functionally, cell wall formation. The chain is UDP-N-acetylenolpyruvoylglucosamine reductase from Alkalilimnicola ehrlichii (strain ATCC BAA-1101 / DSM 17681 / MLHE-1).